The sequence spans 677 residues: UPF0652 protein (677 aa).

The segment at 38 to 84 (ETPGMCCECTDQPAEVVCLQCQDELCTVCSTSLHRRGSRRSHIFKNK) adopts a B box-type; atypical zinc-finger fold. Residues Cys-43, Cys-46, Cys-66, and His-71 each coordinate Zn(2+). Residues 91–111 (YDELNKRDRQPPLHGKEDEKV) are compositionally biased toward basic and acidic residues. Disordered stretches follow at residues 91–142 (YDEL…NNNI) and 156–192 (LNPL…IDED). The segment covering 113 to 126 (NNNNNNNNTNNTNN) has biased composition (low complexity). A compositionally biased stretch (polar residues) spans 163–178 (HTNQQRNGGGSNNHQI).

Belongs to the UPF0652 family.

The polypeptide is UPF0652 protein (Dictyostelium discoideum (Social amoeba)).